The primary structure comprises 519 residues: Chaperone SurA (519 aa).

An N-terminal signal peptide occupies residues 1–31; that stretch reads MMRSLHSLRRMSGTVLALMLAAGLPLSAAQA. Composition is skewed to low complexity over residues 31 to 45 and 197 to 207; these read AQPAKPAPKGDQKPA and PAAAQATRAPA. Disordered stretches follow at residues 31–50 and 196–221; these read AQPAKPAPKGDQKPATPAPS and NPAAAQATRAPAPQQPQPQPRQPAQS. The PpiC 1 domain occupies 223-324; sequence PAMLVLAQIL…NGFHILKVVD (102 aa). The segment at 328-361 is disordered; sequence GGQPAQAARPAPAPAPQQPSSFQEGPSVAAPQGP. The 100-residue stretch at 364–463 folds into the PpiC 2 domain; it reads VTQTHARHIL…FGWHLIQVLE (100 aa).

It localises to the periplasm. The catalysed reaction is [protein]-peptidylproline (omega=180) = [protein]-peptidylproline (omega=0). Chaperone involved in the correct folding and assembly of outer membrane proteins. Recognizes specific patterns of aromatic residues and the orientation of their side chains, which are found more frequently in integral outer membrane proteins. May act in both early periplasmic and late outer membrane-associated steps of protein maturation. This is Chaperone SurA from Bordetella pertussis (strain Tohama I / ATCC BAA-589 / NCTC 13251).